The primary structure comprises 294 residues: Universal stress protein MSMEG_3950/MSMEI_3859 (294 aa).

An ATP-binding site is contributed by glycine 13. An Isoglutamyl lysine isopeptide (Lys-Gln) (interchain with Q-Cter in protein Pup) cross-link involves residue lysine 109. ATP is bound by residues 117–123 (GNRGMGA), 131–132 (ST), glycine 164, aspartate 197, 261–267 (GSHGRGG), and 275–277 (SVS).

Belongs to the universal stress protein A family.

The polypeptide is Universal stress protein MSMEG_3950/MSMEI_3859 (Mycolicibacterium smegmatis (strain ATCC 700084 / mc(2)155) (Mycobacterium smegmatis)).